The following is a 251-amino-acid chain: Malonyl-[acyl-carrier protein] O-methyltransferase (251 aa).

This sequence belongs to the methyltransferase superfamily.

The enzyme catalyses malonyl-[ACP] + S-adenosyl-L-methionine = malonyl-[ACP] methyl ester + S-adenosyl-L-homocysteine. It functions in the pathway cofactor biosynthesis; biotin biosynthesis. Converts the free carboxyl group of a malonyl-thioester to its methyl ester by transfer of a methyl group from S-adenosyl-L-methionine (SAM). It allows to synthesize pimeloyl-ACP via the fatty acid synthetic pathway. This Erwinia billingiae (strain Eb661) protein is Malonyl-[acyl-carrier protein] O-methyltransferase.